A 217-amino-acid polypeptide reads, in one-letter code: Large ribosomal subunit protein uL4 (217 aa).

The disordered stretch occupies residues 42 to 100 (RAAARQGTHSTKTRGDVSGGGRKPYRQKGTGRARQGSTRAPQFTGGGVVHGPKPRDYSQ).

This sequence belongs to the universal ribosomal protein uL4 family. In terms of assembly, part of the 50S ribosomal subunit.

Its function is as follows. One of the primary rRNA binding proteins, this protein initially binds near the 5'-end of the 23S rRNA. It is important during the early stages of 50S assembly. It makes multiple contacts with different domains of the 23S rRNA in the assembled 50S subunit and ribosome. Functionally, forms part of the polypeptide exit tunnel. This Mycolicibacterium paratuberculosis (strain ATCC BAA-968 / K-10) (Mycobacterium paratuberculosis) protein is Large ribosomal subunit protein uL4.